Reading from the N-terminus, the 394-residue chain is 1-deoxy-D-xylulose 5-phosphate reductoisomerase (394 aa).

NADPH is bound by residues T13, G14, T15, I16, and N125. K126 serves as a coordination point for 1-deoxy-D-xylulose 5-phosphate. Residue E127 coordinates NADPH. D151 provides a ligand contact to Mn(2+). Residues S152, E153, S182, and H205 each coordinate 1-deoxy-D-xylulose 5-phosphate. Position 153 (E153) interacts with Mn(2+). G211 lines the NADPH pocket. 1-deoxy-D-xylulose 5-phosphate-binding residues include S218, N223, K224, and E227. E227 lines the Mn(2+) pocket.

It belongs to the DXR family. Mg(2+) is required as a cofactor. The cofactor is Mn(2+).

It catalyses the reaction 2-C-methyl-D-erythritol 4-phosphate + NADP(+) = 1-deoxy-D-xylulose 5-phosphate + NADPH + H(+). The protein operates within isoprenoid biosynthesis; isopentenyl diphosphate biosynthesis via DXP pathway; isopentenyl diphosphate from 1-deoxy-D-xylulose 5-phosphate: step 1/6. Its function is as follows. Catalyzes the NADPH-dependent rearrangement and reduction of 1-deoxy-D-xylulose-5-phosphate (DXP) to 2-C-methyl-D-erythritol 4-phosphate (MEP). This chain is 1-deoxy-D-xylulose 5-phosphate reductoisomerase, found in Methylobacillus flagellatus (strain ATCC 51484 / DSM 6875 / VKM B-1610 / KT).